The primary structure comprises 101 residues: Small ribosomal subunit protein uS14 (101 aa).

Belongs to the universal ribosomal protein uS14 family. Part of the 30S ribosomal subunit. Contacts proteins S3 and S10.

Binds 16S rRNA, required for the assembly of 30S particles and may also be responsible for determining the conformation of the 16S rRNA at the A site. The chain is Small ribosomal subunit protein uS14 from Paramagnetospirillum magneticum (strain ATCC 700264 / AMB-1) (Magnetospirillum magneticum).